A 293-amino-acid chain; its full sequence is Elongation factor Ts (293 aa).

An involved in Mg(2+) ion dislocation from EF-Tu region spans residues 79–82 (TDFV). Position 149 is a phosphoserine (Ser149).

Belongs to the EF-Ts family.

Its subcellular location is the cytoplasm. Its function is as follows. Associates with the EF-Tu.GDP complex and induces the exchange of GDP to GTP. It remains bound to the aminoacyl-tRNA.EF-Tu.GTP complex up to the GTP hydrolysis stage on the ribosome. In Bacillus subtilis (strain 168), this protein is Elongation factor Ts (tsf).